The chain runs to 482 residues: FAD-dependent monooxygenase esdpE (482 aa).

Residues 1 to 21 form the signal peptide; that stretch reads MGAERLKVIIVGGSIAGLTLA. FAD is bound by residues Glu35 and Arg108. N-linked (GlcNAc...) asparagine glycosylation is present at Asn243. FAD-binding residues include Asp308 and Ala321. Residues 440–460 form a helical membrane-spanning segment; the sequence is LFSGSLLLIMSVALLFGVICW.

The protein belongs to the paxM FAD-dependent monooxygenase family. FAD serves as cofactor.

The protein resides in the membrane. It participates in secondary metabolite biosynthesis; terpenoid biosynthesis. FAD-dependent monooxygenase; part of the cluster that mediates the biosynthesis of shearones, diterpenoid pyrones (DPs) which are structurally diverse meroterpenoids consisting of a diterpene linked by a pyrone, and which may exhibit a range of bioactivities. Within the pathway, esdpE takes part to the biosynthesis of the molecular scaffold by catalyzing the formation of an (S)-epoxide ring at the terminal olefin of the geranylgeranyl group. The molecular scaffold is commonly biosynthesized by a series of enzymes including the non-reducing polyketide synthase (NR-PKS) esdpA that generates an alpha-pyrone; the prenyltransferase esdpC that attaches a geranylgeranyl pyrophosphate (GGPP) produced by the GGPP synthase (GGPPS) esdpD onto the pyrone unit; the FAD-dependent monooxygenase esdpE that converts an olefin on the diterpene unit into an epoxide; and the terpene cyclase esdpB that catalyzes the cyclization reactions to give the molecular backbone shearone A. In the modification steps, esdpF oxidizes the hydroxy group to a ketone at C-3 and esdpG then attaches hydroxy groups at both C-11 and C-12. After that, esdpI hydroxylates at C-20 and esdpH hydroxylates at C-6'. The ether bridge is generated by nucleophilic attack of the hydroxy group at C-20 to the carbonyl carbon at C-3. EsdpH can also functions prior to esdpI. The different combinations of these modification enzymes lead to the production of diverse shearone derivatives, shearone I being the end product of the pathway. The alpha-ketoglutarate-dependent dioxygenase esdpJ seems not to be involved in this pathway. The protein is FAD-dependent monooxygenase esdpE of Penicillium shearii (Eupenicillium shearii).